The sequence spans 579 residues: Tricyclene synthase 0e23, chloroplastic (579 aa).

A chloroplast-targeting transit peptide spans 1–66 (MAFCISYLGA…ALCLNAHSTS (66 aa)). Residues Asn-27, Asn-204, and Asn-317 are each glycosylated (N-linked (GlcNAc...) asparagine). Residues Asp-336 and Asp-340 each coordinate Mg(2+). A DDXXD motif motif is present at residues 336–340 (DDIFD). 2 N-linked (GlcNAc...) asparagine glycosylation sites follow: Asn-382 and Asn-463. Asn-480 and Glu-488 together coordinate Mg(2+). An N-linked (GlcNAc...) asparagine glycan is attached at Asn-507.

It belongs to the terpene synthase family. Tpsg subfamily. It depends on Mg(2+) as a cofactor. Requires Mn(2+) as cofactor. As to expression, accumulates in flowers; mostly expressed in both upper and lower petal lobes, and, to a lower extent, in tube and stamens.

Its subcellular location is the plastid. The protein resides in the chloroplast stroma. The enzyme catalyses (2E)-geranyl diphosphate = tricyclene + diphosphate. The catalysed reaction is (2E)-geranyl diphosphate = (E)-beta-ocimene + diphosphate. It participates in secondary metabolite biosynthesis; terpenoid biosynthesis. Functionally, contributes to floral scent emission. This Antirrhinum majus (Garden snapdragon) protein is Tricyclene synthase 0e23, chloroplastic (0e23).